The chain runs to 83 residues: Cytochrome b559 subunit alpha (83 aa).

A helical membrane pass occupies residues 21–35; the sequence is VIHSITIPSLFIAGW. Residue His23 participates in heme binding.

The protein belongs to the PsbE/PsbF family. Heterodimer of an alpha subunit and a beta subunit. PSII is composed of 1 copy each of membrane proteins PsbA, PsbB, PsbC, PsbD, PsbE, PsbF, PsbH, PsbI, PsbJ, PsbK, PsbL, PsbM, PsbT, PsbX, PsbY, PsbZ, Psb30/Ycf12, at least 3 peripheral proteins of the oxygen-evolving complex and a large number of cofactors. It forms dimeric complexes. The cofactor is heme b.

The protein resides in the plastid. Its subcellular location is the chloroplast thylakoid membrane. In terms of biological role, this b-type cytochrome is tightly associated with the reaction center of photosystem II (PSII). PSII is a light-driven water:plastoquinone oxidoreductase that uses light energy to abstract electrons from H(2)O, generating O(2) and a proton gradient subsequently used for ATP formation. It consists of a core antenna complex that captures photons, and an electron transfer chain that converts photonic excitation into a charge separation. This is Cytochrome b559 subunit alpha from Panax ginseng (Korean ginseng).